The primary structure comprises 81 residues: Protein Vpu (81 aa).

Residues 1-6 are Extracellular-facing; sequence MQPIQI. The chain crosses the membrane as a helical span at residues 7–27; the sequence is AIAALVVAIIIAIVVWSIVII. Residues 28–81 lie on the Cytoplasmic side of the membrane; that stretch reads EYRKILRQRKIDRLIDRLIERAEDSGNESEGEISALVEMGVEMGHHAPWDIDDL. Phosphoserine; by host CK2 is present on residues Ser52 and Ser56.

It belongs to the HIV-1 VPU protein family. As to quaternary structure, homopentamer. Interacts with host CD4 and BRTC; these interactions induce proteasomal degradation of CD4. Interacts with host BST2; this interaction leads to the degradation of host BST2. Interacts with host FBXW11. Interacts with host AP1M1; this interaction plays a role in the mistrafficking and subsequent degradation of host BST2. Interacts with host RANBP2; this interaction allows Vpu to down-regulate host BLM sumoylation. In terms of processing, phosphorylated by host CK2. This phosphorylation is necessary for interaction with human BTRC and degradation of CD4.

It localises to the host membrane. With respect to regulation, ion channel activity is inhibited by hexamethylene amiloride in vitro. Its function is as follows. Enhances virion budding by targeting host CD4 and Tetherin/BST2 to proteasome degradation. Degradation of CD4 prevents any unwanted premature interactions between viral Env and its host receptor CD4 in the endoplasmic reticulum. Degradation of antiretroviral protein Tetherin/BST2 is important for virion budding, as BST2 tethers new viral particles to the host cell membrane. Mechanistically, Vpu bridges either CD4 or BST2 to BTRC, a substrate recognition subunit of the Skp1/Cullin/F-box protein E3 ubiquitin ligase, induces their ubiquitination and subsequent proteasomal degradation. The alteration of the E3 ligase specificity by Vpu seems to promote the degradation of host IKBKB, leading to NF-kappa-B down-regulation and subsequent apoptosis. Acts as a viroporin that forms an oligomeric ion channel in membranes. Modulates the host DNA repair mechanisms to promote degradation of nuclear viral cDNA in cells that are already productively infected in order to suppress immune sensing and proviral hyper-integration (superinfection). Manipulates PML-NBs and modulates SUMOylation of host BLM protein thereby enhancing its DNA-end processing activity toward viral unintegrated linear DNA. Also inhibits RAD52-mediated homologous repair of viral cDNA, preventing the generation of dead-end circular forms of single copies of the long terminal repeat and permitting sustained nucleolytic attack. This is Protein Vpu from Homo sapiens (Human).